Consider the following 211-residue polypeptide: Pyridoxine/pyridoxamine 5'-phosphate oxidase (211 aa).

Substrate is bound by residues 7 to 10 and K65; that span reads RREY. Residues 60–65, 75–76, R81, K82, and Q104 each bind FMN; these read RIVLLK and YT. Substrate contacts are provided by Y122, R126, and S130. Residues 139-140 and W184 contribute to the FMN site; that span reads QS. Residue 190–192 participates in substrate binding; that stretch reads RLH. An FMN-binding site is contributed by R194.

It belongs to the pyridoxamine 5'-phosphate oxidase family. Homodimer. The cofactor is FMN.

It carries out the reaction pyridoxamine 5'-phosphate + O2 + H2O = pyridoxal 5'-phosphate + H2O2 + NH4(+). It catalyses the reaction pyridoxine 5'-phosphate + O2 = pyridoxal 5'-phosphate + H2O2. It participates in cofactor metabolism; pyridoxal 5'-phosphate salvage; pyridoxal 5'-phosphate from pyridoxamine 5'-phosphate: step 1/1. Its pathway is cofactor metabolism; pyridoxal 5'-phosphate salvage; pyridoxal 5'-phosphate from pyridoxine 5'-phosphate: step 1/1. Its function is as follows. Catalyzes the oxidation of either pyridoxine 5'-phosphate (PNP) or pyridoxamine 5'-phosphate (PMP) into pyridoxal 5'-phosphate (PLP). In Photobacterium profundum (strain SS9), this protein is Pyridoxine/pyridoxamine 5'-phosphate oxidase.